The sequence spans 455 residues: Fumarate hydratase class II (455 aa).

Residues 96 to 98 (SGT), 122 to 125 (HPND), 132 to 134 (SSN), and Thr180 contribute to the substrate site. Catalysis depends on His181, which acts as the Proton donor/acceptor. Ser311 is a catalytic residue. Substrate contacts are provided by residues Ser312 and 317-319 (KVN).

The protein belongs to the class-II fumarase/aspartase family. Fumarase subfamily. In terms of assembly, homotetramer.

It is found in the cytoplasm. The catalysed reaction is (S)-malate = fumarate + H2O. It participates in carbohydrate metabolism; tricarboxylic acid cycle; (S)-malate from fumarate: step 1/1. In terms of biological role, involved in the TCA cycle. Catalyzes the stereospecific interconversion of fumarate to L-malate. In Listeria monocytogenes serovar 1/2a (strain ATCC BAA-679 / EGD-e), this protein is Fumarate hydratase class II.